The following is a 199-amino-acid chain: Recombination protein RecR (199 aa).

A C4-type zinc finger spans residues 57–72; the sequence is CQKCRTFTEQSLCPIC. In terms of domain architecture, Toprim spans 81 to 176; sequence DTLCVVETPA…AVSRIAHGVP (96 aa).

Belongs to the RecR family.

Functionally, may play a role in DNA repair. It seems to be involved in an RecBC-independent recombinational process of DNA repair. It may act with RecF and RecO. The protein is Recombination protein RecR of Shewanella amazonensis (strain ATCC BAA-1098 / SB2B).